A 706-amino-acid polypeptide reads, in one-letter code: Fatty acid oxidation complex subunit alpha (706 aa).

The interval 1 to 188 is enoyl-CoA hydratase; it reads MDKSFTLNRL…KMGLVDDVVP (188 aa). The segment at 308 to 706 is 3-hydroxyacyl-CoA dehydrogenase; it reads KAVNKVMVLG…MAESGSKFYE (399 aa).

In the N-terminal section; belongs to the enoyl-CoA hydratase/isomerase family. This sequence in the central section; belongs to the 3-hydroxyacyl-CoA dehydrogenase family. As to quaternary structure, heterotetramer of two alpha chains (FadJ) and two beta chains (FadI).

The protein resides in the cytoplasm. The enzyme catalyses a (3S)-3-hydroxyacyl-CoA = a (2E)-enoyl-CoA + H2O. The catalysed reaction is a 4-saturated-(3S)-3-hydroxyacyl-CoA = a (3E)-enoyl-CoA + H2O. It carries out the reaction a (3S)-3-hydroxyacyl-CoA + NAD(+) = a 3-oxoacyl-CoA + NADH + H(+). It catalyses the reaction (3S)-3-hydroxybutanoyl-CoA = (3R)-3-hydroxybutanoyl-CoA. The protein operates within lipid metabolism; fatty acid beta-oxidation. In terms of biological role, catalyzes the formation of a hydroxyacyl-CoA by addition of water on enoyl-CoA. Also exhibits 3-hydroxyacyl-CoA epimerase and 3-hydroxyacyl-CoA dehydrogenase activities. The protein is Fatty acid oxidation complex subunit alpha of Shewanella loihica (strain ATCC BAA-1088 / PV-4).